The sequence spans 508 residues: Glycerol kinase (508 aa).

Thr14 serves as a coordination point for ADP. ATP-binding residues include Thr14, Thr15, and Ser16. Residue Thr14 participates in sn-glycerol 3-phosphate binding. Arg18 lines the ADP pocket. Arg84, Glu85, and Tyr136 together coordinate sn-glycerol 3-phosphate. Arg84, Glu85, and Tyr136 together coordinate glycerol. His232 bears the Phosphohistidine; by HPr mark. Residue Asp246 participates in sn-glycerol 3-phosphate binding. Asp246 and Gln247 together coordinate glycerol. Thr268 and Gly311 together coordinate ADP. Residues Thr268, Gly311, Gln315, and Gly412 each contribute to the ATP site. 2 residues coordinate ADP: Gly412 and Asn416.

This sequence belongs to the FGGY kinase family. Homotetramer and homodimer (in equilibrium). The phosphoenolpyruvate-dependent sugar phosphotransferase system (PTS), including enzyme I, and histidine-containing protein (HPr) are required for the phosphorylation, which leads to the activation of the enzyme.

The enzyme catalyses glycerol + ATP = sn-glycerol 3-phosphate + ADP + H(+). It functions in the pathway polyol metabolism; glycerol degradation via glycerol kinase pathway; sn-glycerol 3-phosphate from glycerol: step 1/1. Activated by phosphorylation and inhibited by fructose 1,6-bisphosphate (FBP). In terms of biological role, key enzyme in the regulation of glycerol uptake and metabolism. Catalyzes the phosphorylation of glycerol to yield sn-glycerol 3-phosphate. This Streptococcus pyogenes serotype M18 (strain MGAS8232) protein is Glycerol kinase.